Reading from the N-terminus, the 490-residue chain is Pup--protein ligase (490 aa).

Residue E9 participates in Mg(2+) binding. Residue R53 participates in ATP binding. Y55 contacts Mg(2+). D57 serves as the catalytic Proton acceptor. E63 is a Mg(2+) binding site. An ATP-binding site is contributed by S66. Positions 160 to 181 (KTHPNGGPVPGSTDPASSTGVP) are disordered. Residue W441 coordinates ATP.

Belongs to the Pup ligase/Pup deamidase family. Pup-conjugating enzyme subfamily.

It catalyses the reaction ATP + [prokaryotic ubiquitin-like protein]-L-glutamate + [protein]-L-lysine = ADP + phosphate + N(6)-([prokaryotic ubiquitin-like protein]-gamma-L-glutamyl)-[protein]-L-lysine.. Its pathway is protein degradation; proteasomal Pup-dependent pathway. The protein operates within protein modification; protein pupylation. In terms of biological role, catalyzes the covalent attachment of the prokaryotic ubiquitin-like protein modifier Pup to the proteasomal substrate proteins, thereby targeting them for proteasomal degradation. This tagging system is termed pupylation. The ligation reaction involves the side-chain carboxylate of the C-terminal glutamate of Pup and the side-chain amino group of a substrate lysine. The chain is Pup--protein ligase from Rothia mucilaginosa (strain DY-18) (Stomatococcus mucilaginosus).